Here is a 592-residue protein sequence, read N- to C-terminus: Membrane protein insertase YidC (592 aa).

The helical transmembrane segment at 7–27 threads the bilayer; that stretch reads NYFVAIALSVLILVAWQYFYV. The tract at residues 38–74 is disordered; sequence AEKAQQTQQVQPQQGGQQPAPGQALPGGAVPGESRDQ. Residues 41–69 show a composition bias toward low complexity; it reads AQQTQQVQPQQGGQQPAPGQALPGGAVPG. Helical transmembrane passes span 367 to 387, 441 to 461, 486 to 506, and 530 to 550; these read LFGN…LIFF, WPIL…YITI, LFGL…WPII, and FTWM…GLVI.

It belongs to the OXA1/ALB3/YidC family. Type 1 subfamily. As to quaternary structure, interacts with the Sec translocase complex via SecD. Specifically interacts with transmembrane segments of nascent integral membrane proteins during membrane integration.

The protein localises to the cell inner membrane. Its function is as follows. Required for the insertion and/or proper folding and/or complex formation of integral membrane proteins into the membrane. Involved in integration of membrane proteins that insert both dependently and independently of the Sec translocase complex, as well as at least some lipoproteins. Aids folding of multispanning membrane proteins. The polypeptide is Membrane protein insertase YidC (Sinorhizobium fredii (strain NBRC 101917 / NGR234)).